The following is a 340-amino-acid chain: Sulfotransferase ppzF (340 aa).

Its pathway is secondary metabolite biosynthesis. Functionally, sulfotransferase; part of the gene cluster that mediates the biosynthesis of pyrrolopyrazines, secondary metabolites showing insecticidal activity. The role of ppzF within the pathway has still to be determined. The single multifunctional NRPS ppzA is sufficient to produce peramine via condensation of 1-pyrroline-5-carboxylate and arginine, N-methylation of the alpha-amino group of arginine and reduction of the thioester and the cyclization to form an iminium ion resulting in release from the peptide synthetase. Deprotonation of this intermediate and oxidation of the pyrroline ring would give rise to peramine. In Epichloe species that produce only peramine, the peramine synthetase gene is not localized in a gene cluster, in contrast to Metarhizium species that contain additional pyrrolopyrazine biosynthesis genes. The 2-oxoglutarate-Fe(II) type oxidoreductase ppzC hydroxylates peramine to yield the newly identified compound 8-hydroxyperamine whereas ppzD converts L-proline into trans-4-hydroxy-L-proline, a precursor of peramine biosynthesis. This is Sulfotransferase ppzF from Metarhizium rileyi (strain RCEF 4871) (Nomuraea rileyi).